A 643-amino-acid polypeptide reads, in one-letter code: Zinc finger protein 23 (643 aa).

The region spanning 1-43 (MLENYGNVASLGFPLLKPAVISQLEGGSELGGSSPLAAGTGLQ) is the KRAB domain. Lys-157 is covalently cross-linked (Glycyl lysine isopeptide (Lys-Gly) (interchain with G-Cter in SUMO2)). A C2H2-type 1; degenerate zinc finger spans residues 168–190 (FKCEELVEPFRCDSQLIQHQENN). 16 C2H2-type zinc fingers span residues 196 to 218 (YQCS…QRLH), 224 to 246 (FKCV…QTIH), 252 to 274 (YQCK…QRIH), 280 to 302 (YQCK…QRVH), 308 to 330 (YECN…QRIH), 336 to 358 (YECN…QSIH), 364 to 386 (YQCK…QRIH), 392 to 414 (YECT…QRIH), 420 to 442 (YECN…LRIH), 448 to 470 (YECN…QRIH), 476 to 498 (FECN…HRIH), 504 to 526 (YQCK…QRIH), 532 to 554 (FKCM…QRIH), 560 to 582 (FQCK…QRSH), 588 to 610 (FRCV…QTVH), and 616 to 638 (YMCS…QSVH).

Belongs to the krueppel C2H2-type zinc-finger protein family.

The protein localises to the nucleus. Functionally, may be involved in transcriptional regulation. May have a role in embryonic development. The chain is Zinc finger protein 23 (ZNF23) from Homo sapiens (Human).